Consider the following 537-residue polypeptide: Pentatricopeptide repeat-containing protein At1g02370, mitochondrial (537 aa).

The N-terminal 18 residues, 1–18 (MNFRNLIASGSRLGKRFC), are a transit peptide targeting the mitochondrion. PPR repeat units follow at residues 171–205 (HQST…NFVN), 206–240 (NSLP…GISP), 241–275 (CGVT…SEAK), 277–307 (TWNT…MEEK), 312–346 (NRDS…RPEV), 347–377 (NNLS…WESK), and 382–416 (DMRL…SKGP).

It belongs to the PPR family. P subfamily.

The protein localises to the mitochondrion. The sequence is that of Pentatricopeptide repeat-containing protein At1g02370, mitochondrial from Arabidopsis thaliana (Mouse-ear cress).